Consider the following 532-residue polypeptide: Polyadenylation factor subunit 2 (532 aa).

A disordered region spans residues 50–72 (AGYQPRQQPQGEEDRRPAHRRTV). Positions 61–72 (EEDRRPAHRRTV) are enriched in basic and acidic residues. 7 WD repeats span residues 143–182 (KVRH…FESI), 185–224 (AHES…VNVI), 227–266 (AHRE…NAES), 270–309 (GHGW…NVNT), 312–353 (GFKN…SGSS), 376–416 (GHDS…AGGA), and 432–471 (AHDY…DPTS). A disordered region spans residues 513–532 (NTAQPEVTDDEPVSIPGFAR).

The protein localises to the nucleus. Required for 3'-end cleavage and polyadenylation of pre-mRNAs. Also involved in chromosome segregation where it has a role in chromosome attachment to the mitotic spindle. This Yarrowia lipolytica (strain CLIB 122 / E 150) (Yeast) protein is Polyadenylation factor subunit 2 (PFS2).